Consider the following 484-residue polypeptide: Iroquois-class homeodomain protein IRX-5 (484 aa).

The segment at residues 112 to 174 is a DNA-binding region (homeobox; TALE-type); the sequence is DPAYRKNATR…NARRRLKKEN (63 aa). 2 disordered regions span residues 176–393 and 424–443; these read MTWT…QCPF and GHPGPGPSPTAGPGSHFNGL. Residues 185–202 are compositionally biased toward acidic residues; the sequence is EDEEEEENIDLEKNDEDE. 2 stretches are compositionally biased toward basic and acidic residues: residues 203–212 and 249–265; these read PQKPEDKGDL and SDFKESSSEGRHDELPR. Position 273 is a phosphoserine (serine 273). Positions 318–328 are enriched in pro residues; it reads SPPPPPPPPPA. Over residues 375–389 the composition is skewed to low complexity; that stretch reads SRASPAPAPARSPSA. A Phosphoserine modification is found at serine 465.

It belongs to the TALE/IRO homeobox family. In terms of tissue distribution, not expressed in the developing metanephric kidney or adult kidney.

The protein resides in the nucleus. Its function is as follows. Establishes the cardiac repolarization gradient by its repressive actions on the KCND2 potassium-channel gene. Required for retinal cone bipolar cell differentiation. May regulate contrast adaptation in the retina and control specific aspects of visual function in circuits of the mammalian retina. Involved in craniofacial and gonadal development. Modulates the migration of progenitor cell populations in branchial arches and gonads by repressing CXCL12. The sequence is that of Iroquois-class homeodomain protein IRX-5 (Irx5) from Mus musculus (Mouse).